The sequence spans 283 residues: MEMO1 family protein MK0963 (283 aa).

Belongs to the MEMO1 family.

The protein is MEMO1 family protein MK0963 of Methanopyrus kandleri (strain AV19 / DSM 6324 / JCM 9639 / NBRC 100938).